A 97-amino-acid chain; its full sequence is Protein E7 (97 aa).

Residues 1–40 (MIGKQATLRDIVLEELVQPIDLHCHEELTEEVEEAVVEEE) form an E7 terminal domain region. Positions 22–26 (LHCHE) match the LXCXE motif; interaction with host RB1 and TMEM173/STING motif. The segment at 52–88 (CGGCETQLKLYVLATDFGIRSFQASLLENVKLVCPAC) is a zinc-finger region. The Nuclear export signal signature appears at 70 to 78 (IRSFQASLL).

The protein belongs to the papillomaviridae E7 protein family. Homodimer. Homooligomer. Interacts with host RB1; this interaction induces dissociation of RB1-E2F1 complex thereby disrupting RB1 activity. Interacts with host EP300; this interaction represses EP300 transcriptional activity. Interacts with protein E2; this interaction inhibits E7 oncogenic activity. Interacts with host TMEM173/STING; this interaction impairs the ability of TMEM173/STING to sense cytosolic DNA and promote the production of type I interferon (IFN-alpha and IFN-beta). Post-translationally, highly phosphorylated.

The protein resides in the host cytoplasm. The protein localises to the host nucleus. In terms of biological role, plays a role in viral genome replication by driving entry of quiescent cells into the cell cycle. Stimulation of progression from G1 to S phase allows the virus to efficiently use the cellular DNA replicating machinery to achieve viral genome replication. E7 protein has both transforming and trans-activating activities. Induces the disassembly of the E2F1 transcription factor from RB1, with subsequent transcriptional activation of E2F1-regulated S-phase genes. Interferes with host histone deacetylation mediated by HDAC1 and HDAC2, leading to transcription activation. Also plays a role in the inhibition of both antiviral and antiproliferative functions of host interferon alpha. Interaction with host TMEM173/STING impairs the ability of TMEM173/STING to sense cytosolic DNA and promote the production of type I interferon (IFN-alpha and IFN-beta). The chain is Protein E7 from Human papillomavirus 23.